The primary structure comprises 193 residues: Xanthine phosphoribosyltransferase (193 aa).

Xanthine is bound by residues L20 and N27. 128-132 (ANGEA) is a 5-phospho-alpha-D-ribose 1-diphosphate binding site. K156 is a binding site for xanthine.

It belongs to the purine/pyrimidine phosphoribosyltransferase family. Xpt subfamily. In terms of assembly, homodimer.

Its subcellular location is the cytoplasm. The catalysed reaction is XMP + diphosphate = xanthine + 5-phospho-alpha-D-ribose 1-diphosphate. The protein operates within purine metabolism; XMP biosynthesis via salvage pathway; XMP from xanthine: step 1/1. Functionally, converts the preformed base xanthine, a product of nucleic acid breakdown, to xanthosine 5'-monophosphate (XMP), so it can be reused for RNA or DNA synthesis. The protein is Xanthine phosphoribosyltransferase of Exiguobacterium sp. (strain ATCC BAA-1283 / AT1b).